The chain runs to 97 residues: Co-chaperonin GroES (97 aa).

Belongs to the GroES chaperonin family. In terms of assembly, heptamer of 7 subunits arranged in a ring. Interacts with the chaperonin GroEL.

The protein localises to the cytoplasm. Functionally, together with the chaperonin GroEL, plays an essential role in assisting protein folding. The GroEL-GroES system forms a nano-cage that allows encapsulation of the non-native substrate proteins and provides a physical environment optimized to promote and accelerate protein folding. GroES binds to the apical surface of the GroEL ring, thereby capping the opening of the GroEL channel. This chain is Co-chaperonin GroES, found in Ectopseudomonas mendocina (strain ymp) (Pseudomonas mendocina).